Reading from the N-terminus, the 199-residue chain is Recombination protein RecR (199 aa).

A C4-type zinc finger spans residues Cys-57–Cys-72. The Toprim domain maps to Ser-80–Pro-174.

It belongs to the RecR family.

Its function is as follows. May play a role in DNA repair. It seems to be involved in an RecBC-independent recombinational process of DNA repair. It may act with RecF and RecO. The protein is Recombination protein RecR of Stutzerimonas stutzeri (strain A1501) (Pseudomonas stutzeri).